The sequence spans 922 residues: Metabotropic glutamate receptor 7 (922 aa).

An N-terminal signal peptide occupies residues 1–34; sequence MVQLRKLLRVLTLMKFPCCVLEVLLCALAAAARG. The Extracellular portion of the chain corresponds to 35-590; the sequence is QEMYAPHSIR…IIKLEWHSPW (556 aa). C67 and C109 are oxidised to a cystine. N98 is a glycosylation site (N-linked (GlcNAc...) asparagine). Residues S159, 180–182, Y230, and D314 contribute to the L-glutamate site; that span reads AST. 7 disulfides stabilise this stretch: C249/C541, C374/C390, C430/C437, C523/C542, C527/C545, C548/C560, and C563/C576. K407 contributes to the L-glutamate binding site. N458 and N486 each carry an N-linked (GlcNAc...) asparagine glycan. N-linked (GlcNAc...) asparagine glycosylation is present at N572. Residues 591–615 traverse the membrane as a helical segment; it reads AVIPVFLAMLGIIATIFVMATFIRY. Over 616 to 627 the chain is Cytoplasmic; that stretch reads NDTPIVRASGRE. Residues 628 to 648 traverse the membrane as a helical segment; that stretch reads LSYVLLTGIFLCYIITFLMIA. Topologically, residues 649–654 are extracellular; sequence KPDVAV. A helical transmembrane segment spans residues 655-675; that stretch reads CSFRRVFLGLGMCISYAALLT. Residues 676 to 702 lie on the Cytoplasmic side of the membrane; that stretch reads KTNRIYRIFEQGKKSVTAPRLISPTSQ. A helical membrane pass occupies residues 703 to 723; sequence LAITSSLISVQLLGVFIWFGV. Topologically, residues 724–753 are extracellular; that stretch reads DPPNIIIDYDEHKTMNPEQARGVLKCDITD. The helical transmembrane segment at 754–775 threads the bilayer; sequence LQIICSLGYSILLMVTCTVYAI. The Cytoplasmic portion of the chain corresponds to 776 to 788; sequence KTRGVPENFNEAK. A helical transmembrane segment spans residues 789 to 810; the sequence is PIGFTMYTTCIVWLAFIPIFFG. At 811–825 the chain is on the extracellular side; the sequence is TAQSAEKLYIQTTTL. Residues 826 to 850 form a helical membrane-spanning segment; it reads TISMNLSASVALGMLYMPKVYIIIF. Residues 851–922 are Cytoplasmic-facing; that stretch reads HPELNVQKRK…VTWYTIPPTV (72 aa).

Belongs to the G-protein coupled receptor 3 family. In terms of assembly, homodimer. Interacts with PICK1.

It is found in the cell membrane. Functionally, G-protein coupled receptor activated by glutamate that regulates axon outgrowth through the MAPK-cAMP-PKA signaling pathway during neuronal development. Ligand binding causes a conformation change that triggers signaling via guanine nucleotide-binding proteins (G proteins) and modulates the activity of downstream effectors, such as adenylate cyclase that it inhibits. In Pongo abelii (Sumatran orangutan), this protein is Metabotropic glutamate receptor 7 (GRM7).